The sequence spans 541 residues: Cytosolic phospholipase A2 gamma (541 aa).

In terms of domain architecture, PLA2c spans 1–541 (MGSSEVSIIP…KDSARSCCLA (541 aa)). The active-site Nucleophile is the S82. The required for lipid droplet localization stretch occupies residues 260–292 (LTLKGLWRRAVANAKSIGHLIFARLLRLQESSQ). Phosphoserine is present on S337. D385 functions as the Proton acceptor in the catalytic mechanism. C538 is modified (cysteine methyl ester). C538 carries the S-farnesyl cysteine lipid modification. Positions 539-541 (CLA) are cleaved as a propeptide — removed in mature form.

As to quaternary structure, (Microbial infection) Interacts with HCV non-structural protein 4B/NS4B; this interaction likely initiates the recruitment of replication complexes to lipid droplets. As to expression, highly expressed in heart and skeletal muscle.

The protein localises to the cell membrane. It localises to the endoplasmic reticulum membrane. The protein resides in the mitochondrion membrane. It is found in the lipid droplet. The enzyme catalyses a 1,2-diacyl-sn-glycero-3-phosphocholine + H2O = a 1-acyl-sn-glycero-3-phosphocholine + a fatty acid + H(+). It catalyses the reaction a 1-O-alkyl-2-acyl-sn-glycero-3-phosphocholine + H2O = a 1-O-alkyl-sn-glycero-3-phosphocholine + a fatty acid + H(+). The catalysed reaction is 1,2-dihexadecanoyl-sn-glycero-3-phosphocholine + H2O = 1-hexadecanoyl-sn-glycero-3-phosphocholine + hexadecanoate + H(+). It carries out the reaction 1-hexadecanoyl-2-(9Z-octadecenoyl)-sn-glycero-3-phosphocholine + H2O = 1-hexadecanoyl-sn-glycero-3-phosphocholine + (9Z)-octadecenoate + H(+). The enzyme catalyses 1-hexadecanoyl-2-(9Z,12Z-octadecadienoyl)-sn-glycero-3-phosphocholine + H2O = (9Z,12Z)-octadecadienoate + 1-hexadecanoyl-sn-glycero-3-phosphocholine + H(+). It catalyses the reaction 1-hexadecanoyl-2-(5Z,8Z,11Z,14Z-eicosatetraenoyl)-sn-glycero-3-phosphocholine + H2O = 1-hexadecanoyl-sn-glycero-3-phosphocholine + (5Z,8Z,11Z,14Z)-eicosatetraenoate + H(+). The catalysed reaction is 1-O-hexadecyl-2-(5Z,8Z,11Z,14Z)-eicosatetraenoyl-sn-glycero-3-phosphocholine + H2O = 1-O-hexadecyl-sn-glycero-3-phosphocholine + (5Z,8Z,11Z,14Z)-eicosatetraenoate + H(+). It carries out the reaction 1-hexadecanoyl-2-(5Z,8Z,11Z,14Z-eicosatetraenoyl)-sn-glycero-3-phosphocholine + H2O = 2-(5Z,8Z,11Z,14Z)-eicosatetraenoyl-sn-glycero-3-phosphocholine + hexadecanoate + H(+). The enzyme catalyses a 1-acyl-sn-glycero-3-phosphocholine + H2O = sn-glycerol 3-phosphocholine + a fatty acid + H(+). It catalyses the reaction 1-hexadecanoyl-sn-glycero-3-phosphocholine + H2O = sn-glycerol 3-phosphocholine + hexadecanoate + H(+). The catalysed reaction is 2 1-hexadecanoyl-sn-glycero-3-phosphocholine = 1,2-dihexadecanoyl-sn-glycero-3-phosphocholine + sn-glycerol 3-phosphocholine. It carries out the reaction 1-hexadecanoyl-sn-glycero-3-phosphoethanolamine + 1-hexadecanoyl-sn-glycero-3-phosphocholine = 1,2-dihexadecanoyl-sn-glycero-3-phosphoethanolamine + sn-glycerol 3-phosphocholine. The enzyme catalyses 1-hexadecanoyl-sn-glycero-3-phosphoethanolamine + 1-hexadecanoyl-sn-glycero-3-phosphocholine = sn-glycero-3-phosphoethanolamine + 1,2-dihexadecanoyl-sn-glycero-3-phosphocholine. It catalyses the reaction 2 1-hexadecanoyl-sn-glycero-3-phosphoethanolamine = 1,2-dihexadecanoyl-sn-glycero-3-phosphoethanolamine + sn-glycero-3-phosphoethanolamine. The catalysed reaction is 1-O-hexadecyl-sn-glycero-3-phosphocholine + 1-hexadecanoyl-sn-glycero-3-phosphocholine = 1-O-hexadecyl-2-hexadecanoyl-sn-glycero-3-phosphocholine + sn-glycerol 3-phosphocholine. It carries out the reaction a 1-O-(1Z-alkenyl)-sn-glycero-3-phosphoethanolamine + 1-hexadecanoyl-sn-glycero-3-phosphocholine = 1-O-(1Z)-alkenyl-2-hexadecanoyl-sn-glycero-3-phosphoethanolamine + sn-glycerol 3-phosphocholine. The enzyme catalyses 1-O-hexadecyl-sn-glycero-3-phosphocholine + 1-hexadecanoyl-sn-glycero-3-phosphoethanolamine = 1-O-hexadecyl-2-hexadecanoyl-sn-glycero-3-phosphocholine + sn-glycero-3-phosphoethanolamine. It catalyses the reaction 1-octadecanoyl-2-(5Z,8Z,11Z,14Z)-eicosatetraenoyl-sn-glycero-3-phosphoethanolamine + 1-hexadecanoyl-sn-glycero-3-phosphocholine = 1-octadecanoyl-sn-glycero-3-phosphoethanolamine + 1-hexadecanoyl-2-(5Z,8Z,11Z,14Z-eicosatetraenoyl)-sn-glycero-3-phosphocholine. The catalysed reaction is 1-octadecanoyl-2-(5Z,8Z,11Z,14Z)-eicosatetraenoyl-sn-glycero-3-phosphoethanolamine + 1-O-hexadecyl-sn-glycero-3-phosphocholine = 1-octadecanoyl-sn-glycero-3-phosphoethanolamine + 1-O-hexadecyl-2-(5Z,8Z,11Z,14Z)-eicosatetraenoyl-sn-glycero-3-phosphocholine. It carries out the reaction 1-hexadecanoyl-2-(9Z,12Z-octadecadienoyl)-sn-glycero-3-phosphocholine + a 1-O-(1Z-alkenyl)-sn-glycero-3-phosphoethanolamine = 1-O-(1Z-alkenyl)-2-(9Z,12Z-octadecadienoyl)-sn-glycero-3-phosphoethanolamine + 1-hexadecanoyl-sn-glycero-3-phosphocholine. The enzyme catalyses 1-hexadecanoyl-2-(5Z,8Z,11Z,14Z-eicosatetraenoyl)-sn-glycero-3-phosphocholine + a 1-O-(1Z-alkenyl)-sn-glycero-3-phosphoethanolamine = 1-O-(1Z)-alkenyl-2-(5Z,8Z,11Z,14Z)-eicosatetraenoyl-sn-glycero-3-phosphoethanolamine + 1-hexadecanoyl-sn-glycero-3-phosphocholine. Its activity is regulated as follows. Not regulated by calcium, coenzyme A or ATP. Lysophospholipase activity is inhibited by palmitoyl-CoA. Lysophospholipase and O-acyltransferase activities are inhibited by methylarachidonoylfluorophosphonate. Lysophospholipase activity is inhibited by phosphatidate or lysophosphatidate. O-acyltransferase activity is up-regulated at low concentration (10-20 uM) of phosphatidate or lysophosphatidate, but inhibited at higher concentrations. Calcium-independent phospholipase, lysophospholipase and O-acyltransferase involved in phospholipid remodeling with implications in endoplasmic reticulum membrane homeostasis and lipid droplet biogenesis. Preferentially hydrolyzes the ester bond of the fatty acyl group attached at the sn-2 position of phospholipids with choline and ethanolamine head groups, producing lysophospholipids that are used in deacylation-reacylation cycles. Transfers the sn-1 fatty acyl from one lysophospholipid molecule to the sn-2 position of another lysophospholipid to form diacyl, alkylacyl and alkenylacyl glycerophospholipids. Cleaves ester bonds but not alkyl or alkenyl ether bonds at sn-1 position of lysophospholipids. Catalyzes sn-2 fatty acyl transfer from phospholipids to the sn-2 position of 1-O-alkyl or 1-O-alkenyl lysophospholipids with lower efficiency. In response to dietary fatty acids, may play a role in the formation of nascent lipid droplets from the endoplasmic reticulum likely by regulating the phospholipid composition of these organelles. Functionally, (Microbial infection) May play a role in replication and assembly of human hepatitis C virus (HCV). In response to HCV infection, promotes remodeling of host endoplasmic reticulum membranes to form organelle-like structures called membranous web, where HCV replication occur. Can further mediate translocation of replication complexes to lipid droplets to enable virion assembly. In terms of biological role, (Microbial infection) May facilitate human T-lymphotropic virus type 1 (HTLV-1) infection by promoting leukotriene B4 (LTB4) biosynthesis. LTB4 acts as a chemoattractant for HTLV-1-infected CD4-positive T cells and favors cell to cell viral transmission. The protein is Cytosolic phospholipase A2 gamma (PLA2G4C) of Homo sapiens (Human).